A 76-amino-acid polypeptide reads, in one-letter code: Putative antitoxin VapB2 (76 aa).

This sequence belongs to the UPF0330 family.

Functionally, possibly the antitoxin component of a type II toxin-antitoxin (TA) system. Its cognate toxin is VapC2 (Potential). In Pyrococcus abyssi (strain GE5 / Orsay), this protein is Putative antitoxin VapB2 (vapB2).